The primary structure comprises 206 residues: MARYLGPKLKLSRREGTDLFLKSGVRAIDSKCKLETPPGRHGARKTRLSEYGVQLREKQKVRRIYGVLEKQFRNYYKDAARQKGNTGENLLTLLETRLDNVVYRMGFGATRAESRQLVSHKSILVNGSVVNIPSFKVSASDVISIREKSKKQARISASLEVASQREKPTWVEVDNTKMEGAFKRLPERSDLSAEINEQLIVELCSK.

An S4 RNA-binding domain is found at 96–159 (TRLDNVVYRM…KKQARISASL (64 aa)).

The protein belongs to the universal ribosomal protein uS4 family. As to quaternary structure, part of the 30S ribosomal subunit. Contacts protein S5. The interaction surface between S4 and S5 is involved in control of translational fidelity.

Its function is as follows. One of the primary rRNA binding proteins, it binds directly to 16S rRNA where it nucleates assembly of the body of the 30S subunit. In terms of biological role, with S5 and S12 plays an important role in translational accuracy. The sequence is that of Small ribosomal subunit protein uS4 from Shewanella violacea.